The sequence spans 294 residues: Putative inactive magnesium transporter MRS2-8 (294 aa).

Residues 179 to 216 (KLKSSMTRLTAQVQKIKDELEQLLEDDEDMAELYLSRK) adopt a coiled-coil conformation.

This sequence belongs to the CorA metal ion transporter (MIT) (TC 1.A.35.5) family.

The protein is Putative inactive magnesium transporter MRS2-8 (MRS2-8) of Arabidopsis thaliana (Mouse-ear cress).